Reading from the N-terminus, the 130-residue chain is Small ribosomal subunit protein uS9 (130 aa).

It belongs to the universal ribosomal protein uS9 family.

This Pasteurella multocida (strain Pm70) protein is Small ribosomal subunit protein uS9.